The sequence spans 291 residues: Pyridoxal 5'-phosphate synthase subunit PdxS (291 aa).

D-ribose 5-phosphate is bound at residue D23. K80 functions as the Schiff-base intermediate with D-ribose 5-phosphate in the catalytic mechanism. G152 is a D-ribose 5-phosphate binding site. Residue R164 coordinates D-glyceraldehyde 3-phosphate. Residues G213 and 234–235 (GS) contribute to the D-ribose 5-phosphate site.

Belongs to the PdxS/SNZ family. In terms of assembly, in the presence of PdxT, forms a dodecamer of heterodimers.

The catalysed reaction is aldehydo-D-ribose 5-phosphate + D-glyceraldehyde 3-phosphate + L-glutamine = pyridoxal 5'-phosphate + L-glutamate + phosphate + 3 H2O + H(+). The protein operates within cofactor biosynthesis; pyridoxal 5'-phosphate biosynthesis. Its function is as follows. Catalyzes the formation of pyridoxal 5'-phosphate from ribose 5-phosphate (RBP), glyceraldehyde 3-phosphate (G3P) and ammonia. The ammonia is provided by the PdxT subunit. Can also use ribulose 5-phosphate and dihydroxyacetone phosphate as substrates, resulting from enzyme-catalyzed isomerization of RBP and G3P, respectively. The protein is Pyridoxal 5'-phosphate synthase subunit PdxS of Methanocorpusculum labreanum (strain ATCC 43576 / DSM 4855 / Z).